Consider the following 813-residue polypeptide: Leucine--tRNA ligase (813 aa).

Residues 40–51 (SYPSGSKLHAGH) carry the 'HIGH' region motif. The short motif at 572–576 (KMSKS) is the 'KMSKS' region element. Lys-575 lines the ATP pocket.

Belongs to the class-I aminoacyl-tRNA synthetase family.

Its subcellular location is the cytoplasm. It catalyses the reaction tRNA(Leu) + L-leucine + ATP = L-leucyl-tRNA(Leu) + AMP + diphosphate. This Clostridium botulinum (strain Langeland / NCTC 10281 / Type F) protein is Leucine--tRNA ligase.